Here is a 552-residue protein sequence, read N- to C-terminus: Protein TRM32 (552 aa).

Positions 295 to 379 are disordered; the sequence is TDLPRDSSTS…NKTAEKTETL (85 aa). Residues 331–351 are compositionally biased toward basic and acidic residues; that stretch reads VRAEKEEKYEVQEERSQENHL. Over residues 352–371 the composition is skewed to polar residues; sequence DSSNQRILQQEPDSVPSTNK.

This chain is Protein TRM32 (TRM32), found in Arabidopsis thaliana (Mouse-ear cress).